A 443-amino-acid polypeptide reads, in one-letter code: Spermidine hydroxycinnamoyltransferase 1 (443 aa).

Catalysis depends on proton acceptor residues H167 and D390.

It belongs to the plant acyltransferase family.

Hydroxycinnamoyl transferase that catalyzes the transfer of an acyl from p-coumaryol-CoA to spermidine, to produce coumaroyl spermidine. Can use feruloyl-CoA as acyl donor. Contributes to the natural variation of spermidine-based phenolamides in rice cultivars. This chain is Spermidine hydroxycinnamoyltransferase 1, found in Oryza sativa subsp. japonica (Rice).